A 90-amino-acid chain; its full sequence is DNA-binding protein HU-beta (90 aa).

It belongs to the bacterial histone-like protein family. As to quaternary structure, heterodimer of an alpha and a beta chain.

In terms of biological role, histone-like DNA-binding protein which is capable of wrapping DNA to stabilize it, and thus to prevent its denaturation under extreme environmental conditions. In Serratia marcescens, this protein is DNA-binding protein HU-beta (hupB).